Reading from the N-terminus, the 572-residue chain is MKVSELFMPTMKETPSDAEIESHKLMLRSGFMRQLSSGIYVYLPLGYRVLRKIENIVREEMDRAGAQEVHMSALMPKELWEESGRWAVFGPEMFKIKDRNEREYCLGPTHEEAFTYIVRNEVTSYRDLPKILYQIQTKFRDERRPRFGVMRCREFTMKDAYSFDMNEEGLDISYKKMYDAYVRIFKRCGLDVKIVEADTGAMGGSNSHEFMVPSSVGEAEIAYCKACGYAANLEKAECLDEPVENTEEIKQMQEVYTPNVRTIEELVNFLNIDAKRFVKTMIYRADDKFVAVLVRGDREVNETKLKNLLKANELELANAEDVERITGAKVGFAGPVGLSIEIYADNEVKYLKNFVVGSNKTDYHIKNVNLSDFKVTKFADLRNITQDDLCPKCLSQKVTIERGIEVGHIFKLGTKYTEAFNCVYTDEKGEKKLMIMGCYGIGINRTAAAIIEQMHDEDGIIWPITVAPYEVIVVPVNIKDEQQSKIAFEIYEDLQKKGVEVLIDDRDERAGVKFKDADLIGIPFRVTIGRKIADGRIEVRNRRTKESVEVDIESAVEFILNLINEEKARYKV.

The protein belongs to the class-II aminoacyl-tRNA synthetase family. ProS type 1 subfamily. Homodimer.

Its subcellular location is the cytoplasm. It catalyses the reaction tRNA(Pro) + L-proline + ATP = L-prolyl-tRNA(Pro) + AMP + diphosphate. Catalyzes the attachment of proline to tRNA(Pro) in a two-step reaction: proline is first activated by ATP to form Pro-AMP and then transferred to the acceptor end of tRNA(Pro). As ProRS can inadvertently accommodate and process non-cognate amino acids such as alanine and cysteine, to avoid such errors it has two additional distinct editing activities against alanine. One activity is designated as 'pretransfer' editing and involves the tRNA(Pro)-independent hydrolysis of activated Ala-AMP. The other activity is designated 'posttransfer' editing and involves deacylation of mischarged Ala-tRNA(Pro). The misacylated Cys-tRNA(Pro) is not edited by ProRS. The polypeptide is Proline--tRNA ligase (Caldicellulosiruptor saccharolyticus (strain ATCC 43494 / DSM 8903 / Tp8T 6331)).